The following is a 195-amino-acid chain: Thymidine kinase (195 aa).

ATP is bound by residues Gly15–Ser22 and Asp88–Gln91. The active-site Proton acceptor is the Glu89. Residues Cys145, Cys148, Cys183, and Cys186 each contribute to the Zn(2+) site.

The protein belongs to the thymidine kinase family. As to quaternary structure, homotetramer.

Its subcellular location is the cytoplasm. The enzyme catalyses thymidine + ATP = dTMP + ADP + H(+). This is Thymidine kinase from Bacillus cereus (strain ZK / E33L).